A 122-amino-acid chain; its full sequence is Large ribosomal subunit protein uL14 (122 aa).

It belongs to the universal ribosomal protein uL14 family. Part of the 50S ribosomal subunit. Forms a cluster with proteins L3 and L19. In the 70S ribosome, L14 and L19 interact and together make contacts with the 16S rRNA in bridges B5 and B8.

Binds to 23S rRNA. Forms part of two intersubunit bridges in the 70S ribosome. In Oleidesulfovibrio alaskensis (strain ATCC BAA-1058 / DSM 17464 / G20) (Desulfovibrio alaskensis), this protein is Large ribosomal subunit protein uL14.